The primary structure comprises 1041 residues: Desmoglein-4 (1041 aa).

The N-terminal stretch at 1 to 23 (MDWLLFRNICLLILFMVVLGVNS) is a signal peptide. Residues 24-49 (EFIVEVKELDIENGTTTWQTVRRQKR) constitute a propeptide that is removed on maturation. Cadherin domains follow at residues 50-157 (EWIK…PPVF), 158-269 (TQNV…FPIL), 270-385 (EKTS…GPTF), and 389-497 (SMTF…CPVI). Residues 50–634 (EWIKFAAACR…RQSNVGLGPA (585 aa)) are Extracellular-facing. A glycan (N-linked (GlcNAc...) asparagine) is linked at Asn110. Asn545 carries N-linked (GlcNAc...) asparagine glycosylation. The chain crosses the membrane as a helical span at residues 635–655 (GIGMIILGLLLLLLSPLLLLM). Residues 656 to 1041 (CCCKRRQPEG…RYSNMHYSRQ (386 aa)) lie on the Cytoplasmic side of the membrane. 2 Desmoglein repeat repeats span residues 884–910 (TLSEAEFQAEMAAASEPMIHGDIIVTE) and 911–941 (TYTTSDPCVQPTTIVFDSQIPPNVVVTETVM). The disordered stretch occupies residues 1014–1041 (ISQTTGSTSPMTSQHRVTRYSNMHYSRQ).

In terms of assembly, interacts with JUP. Strongly expressed in the skin; during the anagen stage of hair follicles in the matrix, precortex and inner rooth sheath.

It is found in the cell membrane. Its subcellular location is the cell junction. It localises to the desmosome. Its function is as follows. A component of desmosome cell-cell junctions which are required for positive regulation of cellular adhesion. Coordinates the transition from proliferation to differentiation in hair follicle keratinocytes. Plays a role in moderating lymphocyte migration to inflamed skin and maintaining homeostasis of the epidermal inflammatory response. The polypeptide is Desmoglein-4 (Dsg4) (Mus musculus (Mouse)).